The sequence spans 1755 residues: Transposon Ty1-GR1 Gag-Pol polyprotein (1755 aa).

Positions 1–16 (MESQQLSQHSHISHGS) are enriched in low complexity. Disordered regions lie at residues 1-93 (MESQ…MMTQ), 126-173 (PQSQ…RPPP), and 352-421 (GSRN…SKST). Composition is skewed to polar residues over residues 48–60 (TKAN…TPAS), 71–93 (SPQT…MMTQ), and 127–152 (QSQF…GNTF). A compositionally biased stretch (low complexity) spans 153–165 (TDSSSADSDMTST). Positions 299-401 (NNGIHINNKV…NSKSKTARAH (103 aa)) are RNA-binding. Over residues 402-418 (NVSTSNNSPSTDNDSIS) the composition is skewed to low complexity. Ser416 is subject to Phosphoserine. The active-site For protease activity; shared with dimeric partner is the Asp461. Residues 583–640 (NVHTSESTRKYPYPFIHRMLAHANAQTIRYSLKNNTITYFNESDVDWSSAIDYQCPDC) are integrase-type zinc finger-like. Positions 660–835 (NSYEPFQYLH…AGLDISTLLP (176 aa)) constitute an Integrase catalytic domain. The Mg(2+) site is built by Asp671 and Asp736. 3 disordered regions span residues 956 to 1087 (SKAV…ETEK), 1092 to 1111 (RSPS…NIVP), and 1130 to 1187 (DLPL…DNET). Residues 960 to 969 (SPTDSTPPST) show a composition bias toward low complexity. Positions 1005–1015 (STPQISNIEST) are enriched in polar residues. A compositionally biased stretch (basic and acidic residues) spans 1038–1053 (ESSHASKSKDFRHSDS). Composition is skewed to polar residues over residues 1054 to 1082 (YSEN…QISD) and 1101 to 1111 (PENNSSHNIVP). The Bipartite nuclear localization signal motif lies at 1178–1212 (KKRSLEDNETEIKVSRDTWNTKNMRSLEPPRSKKR). One can recognise a Reverse transcriptase Ty1/copia-type domain in the interval 1338 to 1476 (NNYYITQLDI…DILGLEIKYQ (139 aa)). The Mg(2+) site is built by Asp1346, Asp1427, Asp1428, Asp1610, Glu1652, and Asp1685. The region spanning 1610–1752 (DASYGNQPYY…IKTFKLLTNK (143 aa)) is the RNase H Ty1/copia-type domain.

The capsid protein forms a homotrimer, from which the VLPs are assembled. The protease is a homodimer, whose active site consists of two apposed aspartic acid residues. In terms of processing, initially, virus-like particles (VLPs) are composed of the structural unprocessed proteins Gag and Gag-Pol, and also contain the host initiator methionine tRNA (tRNA(i)-Met) which serves as a primer for minus-strand DNA synthesis, and a dimer of genomic Ty RNA. Processing of the polyproteins occurs within the particle and proceeds by an ordered pathway, called maturation. First, the protease (PR) is released by autocatalytic cleavage of the Gag-Pol polyprotein yielding capsid protein p45 and a Pol-p154 precursor protein. This cleavage is a prerequisite for subsequent processing of Pol-p154 at the remaining sites to release the mature structural and catalytic proteins. Maturation takes place prior to the RT reaction and is required to produce transposition-competent VLPs.

It is found in the cytoplasm. It localises to the nucleus. It catalyses the reaction DNA(n) + a 2'-deoxyribonucleoside 5'-triphosphate = DNA(n+1) + diphosphate. The catalysed reaction is Endonucleolytic cleavage to 5'-phosphomonoester.. In terms of biological role, capsid protein (CA) is the structural component of the virus-like particle (VLP), forming the shell that encapsulates the retrotransposons dimeric RNA genome. The particles are assembled from trimer-clustered units and there are holes in the capsid shells that allow for the diffusion of macromolecules. CA also has nucleocapsid-like chaperone activity, promoting primer tRNA(i)-Met annealing to the multipartite primer-binding site (PBS), dimerization of Ty1 RNA and initiation of reverse transcription. Its function is as follows. The aspartyl protease (PR) mediates the proteolytic cleavages of the Gag and Gag-Pol polyproteins after assembly of the VLP. Functionally, reverse transcriptase/ribonuclease H (RT) is a multifunctional enzyme that catalyzes the conversion of the retro-elements RNA genome into dsDNA within the VLP. The enzyme displays a DNA polymerase activity that can copy either DNA or RNA templates, and a ribonuclease H (RNase H) activity that cleaves the RNA strand of RNA-DNA heteroduplexes during plus-strand synthesis and hydrolyzes RNA primers. The conversion leads to a linear dsDNA copy of the retrotransposon that includes long terminal repeats (LTRs) at both ends. Integrase (IN) targets the VLP to the nucleus, where a subparticle preintegration complex (PIC) containing at least integrase and the newly synthesized dsDNA copy of the retrotransposon must transit the nuclear membrane. Once in the nucleus, integrase performs the integration of the dsDNA into the host genome. In Saccharomyces cerevisiae (strain ATCC 204508 / S288c) (Baker's yeast), this protein is Transposon Ty1-GR1 Gag-Pol polyprotein (TY1B-GR1).